A 427-amino-acid polypeptide reads, in one-letter code: Enolase (427 aa).

Residue Gln-163 coordinates (2R)-2-phosphoglycerate. Glu-205 functions as the Proton donor in the catalytic mechanism. Mg(2+)-binding residues include Asp-242, Glu-285, and Asp-312. Lys-337, Arg-366, Ser-367, and Lys-388 together coordinate (2R)-2-phosphoglycerate. Catalysis depends on Lys-337, which acts as the Proton acceptor.

This sequence belongs to the enolase family. Requires Mg(2+) as cofactor.

The protein resides in the cytoplasm. It is found in the secreted. The protein localises to the cell surface. It carries out the reaction (2R)-2-phosphoglycerate = phosphoenolpyruvate + H2O. Its pathway is carbohydrate degradation; glycolysis; pyruvate from D-glyceraldehyde 3-phosphate: step 4/5. Functionally, catalyzes the reversible conversion of 2-phosphoglycerate (2-PG) into phosphoenolpyruvate (PEP). It is essential for the degradation of carbohydrates via glycolysis. The chain is Enolase from Herminiimonas arsenicoxydans.